The following is a 130-amino-acid chain: DUF35 domain-containing scaffold protein (130 aa).

4 residues coordinate Zn(2+): Cys-20, Cys-23, Cys-34, and Cys-37.

Belongs to the scaffold protein DUF35 family. Interacts with acetoacetyl-CoA thiolase and HMG-CoA synthase (HMGCS) that catalyzes the first and second step in the mevalonate pathway, respectively.

Functionally, functions as a scaffold to connect the acetoacetyl-CoA thiolase and HMG-CoA synthase (HMGCS) dimers in the channeling thiolase/HMGCS complex, which allows for efficient coupling of the endergonic thiolase reaction with the exergonic HMGCS reaction. The polypeptide is DUF35 domain-containing scaffold protein (Methanothermococcus thermolithotrophicus (Methanococcus thermolithotrophicus)).